The chain runs to 575 residues: Alpha-(1,6)-fucosyltransferase (575 aa).

Residues 1 to 9 (MRPWTGSWR) are Cytoplasmic-facing. A helical; Signal-anchor for type II membrane protein transmembrane segment spans residues 10 to 30 (WIMLILFAWGTLLFYIGGHLV). Over 31–575 (RDNDHPDHSS…KYPTYPEAEK (545 aa)) the chain is Lumenal. Disulfide bonds link cysteine 204-cysteine 266, cysteine 212-cysteine 230, and cysteine 218-cysteine 222. The GT23 domain maps to 206-493 (KAKKLVCNIN…PDASANFHSL (288 aa)). Serine 278 bears the Phosphoserine mark. The SH3-binding signature appears at 299-305 (PRPPYLP). Positions 365–366 (RR) are important for donor substrate binding. A disulfide bond links cysteine 465 and cysteine 472. The SH3 domain maps to 502–563 (QNAHNQIAIY…PSYKVREKIE (62 aa)).

This sequence belongs to the glycosyltransferase 23 family. Post-translationally, tyrosine phosphorylated by PKDCC/VLK.

It localises to the golgi apparatus. The protein resides in the golgi stack membrane. It catalyses the reaction N(4)-{beta-D-GlcNAc-(1-&gt;2)-alpha-D-Man-(1-&gt;3)-[beta-D-GlcNAc-(1-&gt;2)-alpha-D-Man-(1-&gt;6)]-beta-D-Man-(1-&gt;4)-beta-D-GlcNAc-(1-&gt;4)-beta-D-GlcNAc}-L-asparaginyl-[protein] + GDP-beta-L-fucose = an N(4)-{beta-D-GlcNAc-(1-&gt;2)-alpha-D-Man-(1-&gt;3)-[beta-D-GlcNAc-(1-&gt;2)-alpha-D-Man-(1-&gt;6)]-beta-D-Man-(1-&gt;4)-beta-D-GlcNAc-(1-&gt;4)-[alpha-L-Fuc-(1-&gt;6)]-beta-D-GlcNAc}-L-asparaginyl-[protein] + GDP + H(+). It functions in the pathway protein modification; protein glycosylation. Its function is as follows. Catalyzes the addition of fucose in alpha 1-6 linkage to the first GlcNAc residue, next to the peptide chains in N-glycans. This is Alpha-(1,6)-fucosyltransferase (FUT8) from Homo sapiens (Human).